The sequence spans 170 residues: Small ribosomal subunit protein mS25 (170 aa).

The protein belongs to the mitochondrion-specific ribosomal protein mS25 family. In terms of assembly, component of the mitochondrial ribosome small subunit (28S) which comprises a 12S rRNA and about 30 distinct proteins.

Its subcellular location is the mitochondrion. The polypeptide is Small ribosomal subunit protein mS25 (mrps-25) (Caenorhabditis elegans).